A 175-amino-acid polypeptide reads, in one-letter code: ATP synthase subunit b (175 aa).

The chain crosses the membrane as a helical span at residues 20 to 40 (LIFWTAVTFVIVLVILKKIAW).

Belongs to the ATPase B chain family. F-type ATPases have 2 components, F(1) - the catalytic core - and F(0) - the membrane proton channel. F(1) has five subunits: alpha(3), beta(3), gamma(1), delta(1), epsilon(1). F(0) has four main subunits: a(1), b(2) and c(10-14). The alpha and beta chains form an alternating ring which encloses part of the gamma chain. F(1) is attached to F(0) by a central stalk formed by the gamma and epsilon chains, while a peripheral stalk is formed by the delta and b chains.

It localises to the cell inner membrane. Its function is as follows. F(1)F(0) ATP synthase produces ATP from ADP in the presence of a proton or sodium gradient. F-type ATPases consist of two structural domains, F(1) containing the extramembraneous catalytic core and F(0) containing the membrane proton channel, linked together by a central stalk and a peripheral stalk. During catalysis, ATP synthesis in the catalytic domain of F(1) is coupled via a rotary mechanism of the central stalk subunits to proton translocation. Functionally, component of the F(0) channel, it forms part of the peripheral stalk, linking F(1) to F(0). The sequence is that of ATP synthase subunit b from Chlorobaculum parvum (strain DSM 263 / NCIMB 8327) (Chlorobium vibrioforme subsp. thiosulfatophilum).